The following is a 396-amino-acid chain: 1-deoxy-D-xylulose 5-phosphate reductoisomerase (396 aa).

T10, G11, S12, I13, and N123 together coordinate NADPH. 1-deoxy-D-xylulose 5-phosphate is bound at residue K124. E125 lines the NADPH pocket. D149 contributes to the Mn(2+) binding site. 1-deoxy-D-xylulose 5-phosphate-binding residues include S150, E151, S185, and H208. E151 is a binding site for Mn(2+). G214 contributes to the NADPH binding site. Residues S221, N226, K227, and E230 each contribute to the 1-deoxy-D-xylulose 5-phosphate site. E230 lines the Mn(2+) pocket.

It belongs to the DXR family. Mg(2+) serves as cofactor. Mn(2+) is required as a cofactor.

It catalyses the reaction 2-C-methyl-D-erythritol 4-phosphate + NADP(+) = 1-deoxy-D-xylulose 5-phosphate + NADPH + H(+). The protein operates within isoprenoid biosynthesis; isopentenyl diphosphate biosynthesis via DXP pathway; isopentenyl diphosphate from 1-deoxy-D-xylulose 5-phosphate: step 1/6. Its function is as follows. Catalyzes the NADPH-dependent rearrangement and reduction of 1-deoxy-D-xylulose-5-phosphate (DXP) to 2-C-methyl-D-erythritol 4-phosphate (MEP). This is 1-deoxy-D-xylulose 5-phosphate reductoisomerase from Shewanella baltica (strain OS155 / ATCC BAA-1091).